A 327-amino-acid chain; its full sequence is Glycerol-3-phosphate dehydrogenase [NAD(P)+] (327 aa).

3 residues coordinate NADPH: F13, R34, and K107. Sn-glycerol 3-phosphate contacts are provided by K107 and G135. A139 provides a ligand contact to NADPH. Positions 190, 243, 253, 254, and 255 each coordinate sn-glycerol 3-phosphate. K190 serves as the catalytic Proton acceptor. R254 provides a ligand contact to NADPH. Residues V276 and E277 each coordinate NADPH.

It belongs to the NAD-dependent glycerol-3-phosphate dehydrogenase family.

The protein resides in the cytoplasm. It carries out the reaction sn-glycerol 3-phosphate + NAD(+) = dihydroxyacetone phosphate + NADH + H(+). The catalysed reaction is sn-glycerol 3-phosphate + NADP(+) = dihydroxyacetone phosphate + NADPH + H(+). Its pathway is membrane lipid metabolism; glycerophospholipid metabolism. In terms of biological role, catalyzes the reduction of the glycolytic intermediate dihydroxyacetone phosphate (DHAP) to sn-glycerol 3-phosphate (G3P), the key precursor for phospholipid synthesis. This is Glycerol-3-phosphate dehydrogenase [NAD(P)+] from Rhizobium etli (strain CIAT 652).